Reading from the N-terminus, the 314-residue chain is Ornithine carbamoyltransferase (314 aa).

Carbamoyl phosphate contacts are provided by residues serine 58–threonine 61, glutamine 85, arginine 109, and histidine 136–glutamine 139. Residues asparagine 168, aspartate 232, and serine 236 to methionine 237 contribute to the L-ornithine site. Carbamoyl phosphate-binding positions include cysteine 272 to leucine 273 and arginine 300.

The protein belongs to the aspartate/ornithine carbamoyltransferase superfamily. OTCase family.

It localises to the cytoplasm. The enzyme catalyses carbamoyl phosphate + L-ornithine = L-citrulline + phosphate + H(+). The protein operates within amino-acid biosynthesis; L-arginine biosynthesis; L-arginine from L-ornithine and carbamoyl phosphate: step 1/3. In terms of biological role, reversibly catalyzes the transfer of the carbamoyl group from carbamoyl phosphate (CP) to the N(epsilon) atom of ornithine (ORN) to produce L-citrulline. This Hyperthermus butylicus (strain DSM 5456 / JCM 9403 / PLM1-5) protein is Ornithine carbamoyltransferase.